A 283-amino-acid chain; its full sequence is MTSHGEEIEDEQISRIEKGNCKDSQGGMETAICSSPSIVCLTQKLIAEMIGTYFIIFSGCGVVVVNVLYGGTITFPGICVTWGLIVMVMIYSTGHISGAHFNPAVTVTFAVFRRFPWYQVPLYIGAQLTGSLLASLTLRLMFNVTPKAFFGTTPTDSSGQALVAEIIISFLLMFVISGVATDSRATGELAGIAVGMTIILNVFVAGPISGASMNPARSLGPAIVMGRYKGIWVYIVGPFVGIFAGGFVYNFMRFTDKPLRELTKSASFLRSVAQKDNASKSDG.

Met1 is modified (N-acetylmethionine). Basic and acidic residues predominate over residues Met1–Cys21. The tract at residues Met1–Asp23 is disordered. 2 helical membrane-spanning segments follow: residues Gly51–Gly71 and Gly77–Ser97. The NPA 1 signature appears at Asn102–Ala104. 3 helical membrane passes run Val120–Leu140, Ala161–Thr181, and Leu189–Ser209. The NPA 2 signature appears at Asn214–Ala216. A helical transmembrane segment spans residues Ile231–Phe251. Position 267 is a phosphoserine (Ser267).

Belongs to the MIP/aquaporin (TC 1.A.8) family. NIP (TC 1.A.8.12) subfamily.

It localises to the membrane. Functionally, aquaporins facilitate the transport of water and small neutral solutes across cell membranes. This is Probable aquaporin NIP4-2 (NIP4-2) from Arabidopsis thaliana (Mouse-ear cress).